The chain runs to 253 residues: Aminoglycoside nucleotidyltransferase (4') (253 aa).

In terms of assembly, homodimer.

It carries out the reaction kanamycin A + ATP = 4'-adenylylkanamycin A + diphosphate. It catalyses the reaction amikacin + ATP = 4'-adenylylamikacin + diphosphate. The catalysed reaction is neomycin B + ATP = 4'-adenylylneomycin B + diphosphate. The enzyme catalyses paromomycin + ATP = 4'-adenylylparomomycin + diphosphate. It carries out the reaction ribostamycin + ATP = 4'-adenylylribostamycin + diphosphate. It catalyses the reaction tobramycin + ATP = 4'-adenylyltobramycin + diphosphate. The catalysed reaction is kanamycin A + CTP = 4'-cytidylylkanamycin A + diphosphate. The enzyme catalyses kanamycin A + GTP = 4'-guanylylkanamycin A + diphosphate. It carries out the reaction kanamycin A + ITP = 4'-inosinylylkanamycin A + diphosphate. It catalyses the reaction dTTP + kanamycin A = 4'-thymidylylkanamycin A + diphosphate. The catalysed reaction is kanamycin A + UTP = 4'-uridylylkanamycin A + diphosphate. The enzyme catalyses kanamycin A + dATP = 4'-(2'-deoxyadenylyl)kanamycin A + diphosphate. It carries out the reaction kanamycin A + dCTP = 4'-(2'-deoxycytidylyl)kanamycin A + diphosphate. It catalyses the reaction kanamycin A + dGTP = 4'-(2'-deoxyguanylyl)kanamycin A + diphosphate. The catalysed reaction is dUTP + kanamycin A = 4'-(2'-deoxyuridylyl)kanamycin A + diphosphate. The enzyme catalyses amikacin + GTP = 4'-guanylylamikacin + diphosphate. It carries out the reaction amikacin + ITP = 4'-inosinylylamikacin + diphosphate. It catalyses the reaction amikacin + CTP = 4'-cytidylylamikacin + diphosphate. The catalysed reaction is amikacin + UTP = 4'-uridylylamikacin + diphosphate. The enzyme catalyses amikacin + dTTP = 4'-thymidylylamikacin + diphosphate. Inactivates aminoglycoside antibiotics such as kanamycin by catalyzing the transfer of a nucleotidyl group from nucleoside triphosphates such as (d)ATP to the 4'-hydroxyl group of the aminoglycoside. The sequence is that of Aminoglycoside nucleotidyltransferase (4') from Bacillus sp.